A 584-amino-acid polypeptide reads, in one-letter code: Phosphoinositide phospholipase C 7 (584 aa).

Residues 26–102 (EIKTLFDNYS…NSPLSSLEVH (77 aa)) form the EF-hand-like domain. The PI-PLC X-box domain occupies 103 to 248 (QDMDAPLSHY…LKKRIMISTK (146 aa)). Catalysis depends on residues histidine 118 and histidine 164. The segment at 285 to 318 (DRSVDKNDSNGDDDDDDDDDDDDDDGDDKIKKNA) is disordered. The residue at position 287 (serine 287) is a Phosphoserine. Residues 294 to 311 (NGDDDDDDDDDDDDDDGD) are compositionally biased toward acidic residues. Residues 323–439 (KHLIAIEAGK…GYIKKPDLLL (117 aa)) enclose the PI-PLC Y-box domain. The C2 domain maps to 433-566 (KKPDLLLKSN…QGIRAVPLRN (134 aa)).

The cofactor is Ca(2+). Expressed in leaves, roots, flowers and siliques.

It is found in the cell membrane. The catalysed reaction is a 1,2-diacyl-sn-glycero-3-phospho-(1D-myo-inositol-4,5-bisphosphate) + H2O = 1D-myo-inositol 1,4,5-trisphosphate + a 1,2-diacyl-sn-glycerol + H(+). In terms of biological role, the production of the second messenger molecules diacylglycerol (DAG) and inositol 1,4,5-trisphosphate (IP3) is mediated by activated phosphatidylinositol-specific phospholipase C enzymes. The chain is Phosphoinositide phospholipase C 7 (PLC7) from Arabidopsis thaliana (Mouse-ear cress).